We begin with the raw amino-acid sequence, 779 residues long: Vezatin (779 aa).

Transmembrane regions (helical) follow at residues 139–159 (LATPNIWDLSMLFAFISLLVM) and 162–182 (TWWIVSSWLVWGVILFVYLVI). Positions 430–462 (VRSLQLHLKALLNEVIILEDELEKLVCTKETQE) form a coiled coil. Disordered stretches follow at residues 618–719 (PVDP…DSLQ) and 757–779 (EQTFGGEEEEQIIEENKNEIEEK). Over residues 625 to 634 (ISNSEPSMNS) the composition is skewed to polar residues. Residues 638-649 (KVSKNDTEEESN) are compositionally biased toward basic and acidic residues. Residues 706-719 (GLTTAPPTPRDSLQ) show a composition bias toward polar residues. The span at 770–779 (EENKNEIEEK) shows a compositional bias: basic and acidic residues.

It belongs to the vezatin family. As to quaternary structure, interacts with USH2A (via the cytoplasmic region); the interaction associates VEZT with the USH2 complex at the stereocilia base. Interacts with myosin MYO7A and the cadherin-catenins complex.

The protein resides in the cell membrane. The protein localises to the cell projection. It is found in the stereocilium membrane. Its subcellular location is the cell junction. It localises to the adherens junction. The protein resides in the nucleus. The protein localises to the cytoplasmic vesicle. It is found in the secretory vesicle. Its subcellular location is the acrosome. Functionally, plays a pivotal role in the establishment of adherens junctions and their maintenance in adult life. Required for morphogenesis of the preimplantation embryo, and for the implantation process. (Microbial infection) In case of Listeria infection, promotes bacterial internalization by participating in myosin VIIa recruitment to the entry site. This is Vezatin (VEZT) from Homo sapiens (Human).